Reading from the N-terminus, the 296-residue chain is Polyamine aminopropyltransferase (296 aa).

The 234-residue stretch at 5–238 folds into the PABS domain; that stretch reads ELWYETLHAN…GIMTFAWATQ (234 aa). Glutamine 33 provides a ligand contact to S-methyl-5'-thioadenosine. Spermidine is bound by residues histidine 64 and aspartate 88. Residues glutamate 108 and 140–141 each bind S-methyl-5'-thioadenosine; that span reads DG. Aspartate 158 serves as the catalytic Proton acceptor. 158–161 is a spermidine binding site; it reads DCTD. Proline 165 provides a ligand contact to S-methyl-5'-thioadenosine.

Belongs to the spermidine/spermine synthase family. As to quaternary structure, homodimer or homotetramer.

The protein localises to the cytoplasm. It catalyses the reaction S-adenosyl 3-(methylsulfanyl)propylamine + putrescine = S-methyl-5'-thioadenosine + spermidine + H(+). It participates in amine and polyamine biosynthesis; spermidine biosynthesis; spermidine from putrescine: step 1/1. Its function is as follows. Catalyzes the irreversible transfer of a propylamine group from the amino donor S-adenosylmethioninamine (decarboxy-AdoMet) to putrescine (1,4-diaminobutane) to yield spermidine. The sequence is that of Polyamine aminopropyltransferase from Yersinia pseudotuberculosis serotype O:1b (strain IP 31758).